A 190-amino-acid polypeptide reads, in one-letter code: Protein GrpE (190 aa).

The segment covering 1-18 has biased composition (polar residues); that stretch reads MTETPNTSSEEIQTSEPS. Residues 1–21 form a disordered region; the sequence is MTETPNTSSEEIQTSEPSPDN.

This sequence belongs to the GrpE family. As to quaternary structure, homodimer.

The protein resides in the cytoplasm. Participates actively in the response to hyperosmotic and heat shock by preventing the aggregation of stress-denatured proteins, in association with DnaK and GrpE. It is the nucleotide exchange factor for DnaK and may function as a thermosensor. Unfolded proteins bind initially to DnaJ; upon interaction with the DnaJ-bound protein, DnaK hydrolyzes its bound ATP, resulting in the formation of a stable complex. GrpE releases ADP from DnaK; ATP binding to DnaK triggers the release of the substrate protein, thus completing the reaction cycle. Several rounds of ATP-dependent interactions between DnaJ, DnaK and GrpE are required for fully efficient folding. This chain is Protein GrpE, found in Chlamydia trachomatis serovar A (strain ATCC VR-571B / DSM 19440 / HAR-13).